Here is a 282-residue protein sequence, read N- to C-terminus: Shikimate dehydrogenase (NADP(+)) (282 aa).

Shikimate contacts are provided by residues 16–18 (SLS) and T63. The active-site Proton acceptor is the K67. Shikimate is bound by residues N88 and D103. NADP(+)-binding positions include 128-132 (GAGGA) and L219. Y221 lines the shikimate pocket. Residue G243 coordinates NADP(+).

This sequence belongs to the shikimate dehydrogenase family. As to quaternary structure, homodimer.

The enzyme catalyses shikimate + NADP(+) = 3-dehydroshikimate + NADPH + H(+). Its pathway is metabolic intermediate biosynthesis; chorismate biosynthesis; chorismate from D-erythrose 4-phosphate and phosphoenolpyruvate: step 4/7. Involved in the biosynthesis of the chorismate, which leads to the biosynthesis of aromatic amino acids. Catalyzes the reversible NADPH linked reduction of 3-dehydroshikimate (DHSA) to yield shikimate (SA). The polypeptide is Shikimate dehydrogenase (NADP(+)) (Xylella fastidiosa (strain M12)).